The chain runs to 531 residues: MSYVTRWLFSTSHKDIGILYLIYGMVSAMVATGMSVIIRLELSGPGPMFLHGNNQVFNVLVTGHAIAMIFLFVMPILIGSFGNYFLPIMIGAVDMAFARLNNISFWCLPPALVCVIASVLIETGAGTGWTVYPPLSSISAHSGPSVDLAIFAIHLTSISSLLGAINFIVTTLNMRSIGIHMIDMPLFVWAIFFTAILLLLSLPVLTAGVTLLLMDRNFNTGFYEVAAGGDPILYEHLFYFFGHPEVYIIIIPGFGIISHVISTYTKKPIFGQIGMIYAIGSIGLLGFLVWSHHMYVVGLDIDSRAYFTSATMVIAIPTGIKIFSWLATLYGGELRLAVPMLFALGFLFLFTIGGLTGVMLSNASIDVAFHDTYYVVGHFHYVLSMGALFSLIAGYYYWGPAMFGLKYNKVLAEVHYWLLFVSVNIIFLPMHFLGLNGMPRRIPQYPDAFVGWNVVSSWGSIMSVISVLIGLYSVLVQLTNGENEREEIQVTPDYLESNNTRDVRDSDLELITSRPAQYHTFSELPILIQQI.

The chain crosses the membrane as a helical span at residues 18–38 (ILYLIYGMVSAMVATGMSVII). The Ca(2+) site is built by glutamate 41 and glycine 46. 6 helical membrane-spanning segments follow: residues 59–79 (VLVT…ILIG), 103–123 (ISFW…LIET), 149–169 (AIFA…NFIV), 185–205 (PLFV…LPVL), 237–257 (LFYF…FGII), and 269–289 (IFGQ…GFLV). Position 64 (histidine 64) interacts with Fe(II)-heme a. Histidine 243 contacts Cu cation. A cross-link (1'-histidyl-3'-tyrosine (His-Tyr)) is located at residues 243-247 (HPEVY). Tyrosine 247 provides a ligand contact to O2. Cu cation is bound by residues histidine 292 and histidine 293. 2 helical membrane-spanning segments follow: residues 312–332 (MVIA…LYGG) and 340–360 (MLFA…GVML). Histidine 370 and aspartate 371 together coordinate Mg(2+). Heme a3 is bound at residue histidine 378. Histidine 380 is a Fe(II)-heme a binding site. Transmembrane regions (helical) follow at residues 385-405 (MGAL…MFGL) and 414-434 (VHYW…HFLG). Proline 443 is a Ca(2+) binding site. A helical membrane pass occupies residues 458 to 478 (WGSIMSVISVLIGLYSVLVQL).

Belongs to the heme-copper respiratory oxidase family. Component of the cytochrome c oxidase (complex IV, CIV), a multisubunit enzyme composed of a catalytic core of 3 subunits and several supernumerary subunits. The complex exists as a monomer or a dimer and forms supercomplexes (SCs) in the inner mitochondrial membrane with ubiquinol-cytochrome c oxidoreductase (cytochrome b-c1 complex, complex III, CIII). Requires heme as cofactor. Cu cation serves as cofactor.

It localises to the mitochondrion inner membrane. It catalyses the reaction 4 Fe(II)-[cytochrome c] + O2 + 8 H(+)(in) = 4 Fe(III)-[cytochrome c] + 2 H2O + 4 H(+)(out). The protein operates within energy metabolism; oxidative phosphorylation. In terms of biological role, component of the cytochrome c oxidase, the last enzyme in the mitochondrial electron transport chain which drives oxidative phosphorylation. The respiratory chain contains 3 multisubunit complexes succinate dehydrogenase (complex II, CII), ubiquinol-cytochrome c oxidoreductase (cytochrome b-c1 complex, complex III, CIII) and cytochrome c oxidase (complex IV, CIV), that cooperate to transfer electrons derived from NADH and succinate to molecular oxygen, creating an electrochemical gradient over the inner membrane that drives transmembrane transport and the ATP synthase. Cytochrome c oxidase is the component of the respiratory chain that catalyzes the reduction of oxygen to water. Electrons originating from reduced cytochrome c in the intermembrane space (IMS) are transferred via the dinuclear copper A center (CU(A)) of subunit 2 and heme A of subunit 1 to the active site in subunit 1, a binuclear center (BNC) formed by heme A3 and copper B (CU(B)). The BNC reduces molecular oxygen to 2 water molecules using 4 electrons from cytochrome c in the IMS and 4 protons from the mitochondrial matrix. The sequence is that of Cytochrome c oxidase subunit 1 (COX1) from Candida albicans (strain SC5314 / ATCC MYA-2876) (Yeast).